The sequence spans 469 residues: 3-isopropylmalate dehydratase large subunit (469 aa).

[4Fe-4S] cluster contacts are provided by Cys-347, Cys-407, and Cys-410.

Belongs to the aconitase/IPM isomerase family. LeuC type 1 subfamily. Heterodimer of LeuC and LeuD. [4Fe-4S] cluster is required as a cofactor.

It catalyses the reaction (2R,3S)-3-isopropylmalate = (2S)-2-isopropylmalate. It participates in amino-acid biosynthesis; L-leucine biosynthesis; L-leucine from 3-methyl-2-oxobutanoate: step 2/4. Functionally, catalyzes the isomerization between 2-isopropylmalate and 3-isopropylmalate, via the formation of 2-isopropylmaleate. The polypeptide is 3-isopropylmalate dehydratase large subunit (Sorangium cellulosum (strain So ce56) (Polyangium cellulosum (strain So ce56))).